Reading from the N-terminus, the 240-residue chain is 4-hydroxy-tetrahydrodipicolinate reductase (240 aa).

Residues 79–81 (ATT) and 103–106 (SANM) each bind NAD(+). The active-site Proton donor/acceptor is the H135. H136 is a binding site for (S)-2,3,4,5-tetrahydrodipicolinate. K139 functions as the Proton donor in the catalytic mechanism. Residue 145-146 (GT) participates in (S)-2,3,4,5-tetrahydrodipicolinate binding.

This sequence belongs to the DapB family.

The protein localises to the cytoplasm. It carries out the reaction (S)-2,3,4,5-tetrahydrodipicolinate + NAD(+) + H2O = (2S,4S)-4-hydroxy-2,3,4,5-tetrahydrodipicolinate + NADH + H(+). The catalysed reaction is (S)-2,3,4,5-tetrahydrodipicolinate + NADP(+) + H2O = (2S,4S)-4-hydroxy-2,3,4,5-tetrahydrodipicolinate + NADPH + H(+). Its pathway is amino-acid biosynthesis; L-lysine biosynthesis via DAP pathway; (S)-tetrahydrodipicolinate from L-aspartate: step 4/4. Functionally, catalyzes the conversion of 4-hydroxy-tetrahydrodipicolinate (HTPA) to tetrahydrodipicolinate. The polypeptide is 4-hydroxy-tetrahydrodipicolinate reductase (Staphylococcus epidermidis (strain ATCC 12228 / FDA PCI 1200)).